The chain runs to 164 residues: Cytochrome c-type biogenesis protein CcmE (164 aa).

The Cytoplasmic portion of the chain corresponds to 1 to 8; it reads MNPRRQKR. A helical; Signal-anchor for type II membrane protein membrane pass occupies residues 9-29; it reads LIVISAIVLVIGAAIGLMLYA. Over 30–164 the chain is Periplasmic; it reads LSQNIDLFYT…QAYSTPKVSG (135 aa). Heme is bound by residues His-132 and Tyr-136.

It belongs to the CcmE/CycJ family.

Its subcellular location is the cell inner membrane. Heme chaperone required for the biogenesis of c-type cytochromes. Transiently binds heme delivered by CcmC and transfers the heme to apo-cytochromes in a process facilitated by CcmF and CcmH. The chain is Cytochrome c-type biogenesis protein CcmE from Pseudoalteromonas atlantica (strain T6c / ATCC BAA-1087).